Consider the following 285-residue polypeptide: Probable endonuclease 4 (285 aa).

Residues H69, H109, E145, D179, H182, H216, D229, H231, and E261 each contribute to the Zn(2+) site.

It belongs to the AP endonuclease 2 family. Requires Zn(2+) as cofactor.

The enzyme catalyses Endonucleolytic cleavage to 5'-phosphooligonucleotide end-products.. Its function is as follows. Endonuclease IV plays a role in DNA repair. It cleaves phosphodiester bonds at apurinic or apyrimidinic (AP) sites, generating a 3'-hydroxyl group and a 5'-terminal sugar phosphate. The polypeptide is Probable endonuclease 4 (Shigella dysenteriae serotype 1 (strain Sd197)).